The primary structure comprises 296 residues: MQDRFIKCIAQLPKPLSDALIPLLNADFAGHIDAQQLGMLTTKSQLEESELLLALLPIAAALAKPPISEFYVGAIAKGKSGDIYMGANLELSGEALFHSVHAEQSAISHAWLSGETQILDVVVNFSPCGHCRQFMNEMVEGQKVVIHLPEQKAQPLAHYLPYAFGPSNLNITEPLLSKQQHELSLDSSDPMIIEALDHASLSYAPYSNSYAAVVLETKDGATYCGRYAENAAFNPSMLPMQMALSTMTRHNREFTEINRAVLIESAQGKISLVGATMDALHAVAAVELEHIVIDPA.

2 CMP/dCMP-type deaminase domains span residues 47-167 (EESE…FGPS) and 186-296 (DSSD…IDPA). 88–90 (NLE) is a binding site for substrate. His-101 lines the Zn(2+) pocket. Residue Glu-103 is the Proton donor of the active site. Residues Cys-128 and Cys-131 each coordinate Zn(2+).

It belongs to the cytidine and deoxycytidylate deaminase family. Homodimer. Zn(2+) is required as a cofactor.

The enzyme catalyses cytidine + H2O + H(+) = uridine + NH4(+). The catalysed reaction is 2'-deoxycytidine + H2O + H(+) = 2'-deoxyuridine + NH4(+). Its function is as follows. This enzyme scavenges exogenous and endogenous cytidine and 2'-deoxycytidine for UMP synthesis. The chain is Cytidine deaminase from Shewanella woodyi (strain ATCC 51908 / MS32).